Consider the following 502-residue polypeptide: Glycerol kinase (502 aa).

Threonine 14 contributes to the ADP binding site. Threonine 14, threonine 15, and serine 16 together coordinate ATP. Threonine 14 lines the sn-glycerol 3-phosphate pocket. Arginine 18 serves as a coordination point for ADP. Residues arginine 84, glutamate 85, and tyrosine 136 each contribute to the sn-glycerol 3-phosphate site. Residues arginine 84, glutamate 85, and tyrosine 136 each coordinate glycerol. Residue histidine 232 is modified to Phosphohistidine; by HPr. Sn-glycerol 3-phosphate is bound at residue aspartate 246. Residues aspartate 246 and glutamine 247 each coordinate glycerol. ADP-binding residues include threonine 268 and glycine 311. ATP-binding residues include threonine 268, glycine 311, glutamine 315, and glycine 412. ADP-binding residues include glycine 412 and asparagine 416.

It belongs to the FGGY kinase family. Homotetramer and homodimer (in equilibrium). The phosphoenolpyruvate-dependent sugar phosphotransferase system (PTS), including enzyme I, and histidine-containing protein (HPr) are required for the phosphorylation, which leads to the activation of the enzyme.

The catalysed reaction is glycerol + ATP = sn-glycerol 3-phosphate + ADP + H(+). It functions in the pathway polyol metabolism; glycerol degradation via glycerol kinase pathway; sn-glycerol 3-phosphate from glycerol: step 1/1. Its activity is regulated as follows. Activated by phosphorylation and inhibited by fructose 1,6-bisphosphate (FBP). Its function is as follows. Key enzyme in the regulation of glycerol uptake and metabolism. Catalyzes the phosphorylation of glycerol to yield sn-glycerol 3-phosphate. In Streptococcus pneumoniae (strain ATCC 700669 / Spain 23F-1), this protein is Glycerol kinase.